The following is a 173-amino-acid chain: Photosystem I assembly protein Ycf3 (173 aa).

3 TPR repeats span residues 35–68, 72–105, and 120–153; these read AFSY…EEDP, SYIL…NFKL, and GVQA…APDN.

Belongs to the Ycf3 family.

It is found in the plastid. The protein localises to the chloroplast thylakoid membrane. Essential for the assembly of the photosystem I (PSI) complex. May act as a chaperone-like factor to guide the assembly of the PSI subunits. The sequence is that of Photosystem I assembly protein Ycf3 from Porphyra purpurea (Red seaweed).